The chain runs to 219 residues: Large ribosomal subunit protein bL31m (219 aa).

Composition is skewed to basic and acidic residues over residues 169–181 (KKEEEEAAKKAAE) and 210–219 (KETRHYGKKK). 2 disordered regions span residues 169-188 (KKEEEEAAKKAAEAEEADPF) and 200-219 (TENMNPGLNFKETRHYGKKK).

It belongs to the bacterial ribosomal protein bL31 family. Highly divergent. As to quaternary structure, component of the mitochondrial large ribosomal subunit (mt-LSU). Mature N.crassa 74S mitochondrial ribosomes consist of a small (37S) and a large (54S) subunit. The 37S small subunit contains a 16S ribosomal RNA (16S mt-rRNA) and 32 different proteins. The 54S large subunit contains a 23S rRNA (23S mt-rRNA) and 42 different proteins. bL31m bridges the mt-LSU central protuberance and the mt-SSU head.

The protein localises to the mitochondrion. Component of the mitochondrial ribosome (mitoribosome), a dedicated translation machinery responsible for the synthesis of mitochondrial genome-encoded proteins, including at least some of the essential transmembrane subunits of the mitochondrial respiratory chain. The mitoribosomes are attached to the mitochondrial inner membrane and translation products are cotranslationally integrated into the membrane. The chain is Large ribosomal subunit protein bL31m (mrpl36) from Neurospora crassa (strain ATCC 24698 / 74-OR23-1A / CBS 708.71 / DSM 1257 / FGSC 987).